The chain runs to 611 residues: 4-hydroxy-3-methylbut-2-en-1-yl diphosphate synthase (flavodoxin) (611 aa).

Positions 520, 523, 554, and 561 each coordinate [4Fe-4S] cluster.

It belongs to the IspG family. The cofactor is [4Fe-4S] cluster.

It carries out the reaction (2E)-4-hydroxy-3-methylbut-2-enyl diphosphate + oxidized [flavodoxin] + H2O + 2 H(+) = 2-C-methyl-D-erythritol 2,4-cyclic diphosphate + reduced [flavodoxin]. The protein operates within isoprenoid biosynthesis; isopentenyl diphosphate biosynthesis via DXP pathway; isopentenyl diphosphate from 1-deoxy-D-xylulose 5-phosphate: step 5/6. In terms of biological role, converts 2C-methyl-D-erythritol 2,4-cyclodiphosphate (ME-2,4cPP) into 1-hydroxy-2-methyl-2-(E)-butenyl 4-diphosphate. This is 4-hydroxy-3-methylbut-2-en-1-yl diphosphate synthase (flavodoxin) from Parabacteroides distasonis (strain ATCC 8503 / DSM 20701 / CIP 104284 / JCM 5825 / NCTC 11152).